A 1053-amino-acid polypeptide reads, in one-letter code: DNA-directed RNA polymerase subunit beta' (1053 aa).

Zn(2+)-binding residues include cysteine 60, cysteine 62, cysteine 75, and cysteine 78. The Mg(2+) site is built by aspartate 449, aspartate 451, and aspartate 453. Positions 818, 892, 899, and 902 each coordinate Zn(2+).

It belongs to the RNA polymerase beta' chain family. As to quaternary structure, the RNAP catalytic core consists of 2 alpha, 1 beta, 1 beta' and 1 omega subunit. When a sigma factor is associated with the core the holoenzyme is formed, which can initiate transcription. Mg(2+) serves as cofactor. The cofactor is Zn(2+).

It carries out the reaction RNA(n) + a ribonucleoside 5'-triphosphate = RNA(n+1) + diphosphate. In terms of biological role, DNA-dependent RNA polymerase catalyzes the transcription of DNA into RNA using the four ribonucleoside triphosphates as substrates. The polypeptide is DNA-directed RNA polymerase subunit beta' (Listeria grayi (Listeria murrayi)).